The primary structure comprises 149 residues: Probable cyclic pyranopterin monophosphate synthase (149 aa).

Substrate-binding positions include 67–69 and 103–104; these read LCH and ME. Asp-118 is a catalytic residue.

This sequence belongs to the MoaC family. In terms of assembly, homohexamer; trimer of dimers.

The catalysed reaction is (8S)-3',8-cyclo-7,8-dihydroguanosine 5'-triphosphate = cyclic pyranopterin phosphate + diphosphate. Its pathway is cofactor biosynthesis; molybdopterin biosynthesis. In terms of biological role, catalyzes the conversion of (8S)-3',8-cyclo-7,8-dihydroguanosine 5'-triphosphate to cyclic pyranopterin monophosphate (cPMP). The chain is Probable cyclic pyranopterin monophosphate synthase from Saccharolobus solfataricus (strain ATCC 35092 / DSM 1617 / JCM 11322 / P2) (Sulfolobus solfataricus).